Here is a 444-residue protein sequence, read N- to C-terminus: Protein EMP46 (444 aa).

Residues 1–46 (MTTRKTASSLQLLGKITGTKAGTKQKKMNFINGLIWLYMCVWMVHG) form the signal peptide. Residues 47–408 (KVTQKDELKW…YGKQTKGHDE (362 aa)) lie on the Lumenal side of the membrane. Residues 52-269 (DELKWNKGYS…EILKMKLYDG (218 aa)) form the L-type lectin-like domain. Residue tyrosine 177 coordinates K(+). Residues cysteine 196 and cysteine 230 are joined by a disulfide bond. The helical transmembrane segment at 409–429 (IFSKISVWLALLIFIMITLAY) threads the bilayer. The segment at 429–432 (YYMF) is mediates the interactions with COPI and COPII coat complexes. Residues 430-444 (YMFRINQDIKKVKLL) are Cytoplasmic-facing. The Di-lysine motif signature appears at 440 to 444 (KVKLL).

This sequence belongs to the EMP46/EMP47 family. As to quaternary structure, interacts with EMP47 in the endoplasmic reticulum membrane in order to be transported to the Golgi apparatus. Interacts with the coatomer proteins COP1, SEC21 and SEC23.

It localises to the golgi apparatus membrane. Its subcellular location is the endoplasmic reticulum membrane. Its function is as follows. Involved in the secretion of glycoproteins and in nucleus architecture and gene silencing. The polypeptide is Protein EMP46 (EMP46) (Saccharomyces cerevisiae (strain ATCC 204508 / S288c) (Baker's yeast)).